The following is a 529-amino-acid chain: GTPase Obg (529 aa).

The Obg domain maps to 2–159 (PTFVDRVVLH…LDAVLELKTV (158 aa)). Positions 62-86 (FHPHQRASRGRPGQGSNRHGADGAD) are disordered. An OBG-type G domain is found at 160-332 (ADVALVGFPS…LSLALADLVA (173 aa)). Residues 166–173 (GFPSAGKS), 191–195 (FTTLV), 213–216 (DVPG), 284–287 (NKID), and 313–315 (STA) each bind GTP. Residues Ser-173 and Thr-193 each coordinate Mg(2+). One can recognise an OCT domain in the interval 350 to 427 (PRAVNEPDFT…IGEVTFDWEP (78 aa)). Disordered regions lie at residues 434-494 (LGNG…DRLR) and 506-529 (ARRA…EEEG). 2 stretches are compositionally biased toward low complexity: residues 461 to 472 (AGTAASGAAPSP) and 508 to 520 (RAAA…VRGE).

Belongs to the TRAFAC class OBG-HflX-like GTPase superfamily. OBG GTPase family. Monomer. Requires Mg(2+) as cofactor.

It is found in the cytoplasm. Its function is as follows. An essential GTPase which binds GTP, GDP and possibly (p)ppGpp with moderate affinity, with high nucleotide exchange rates and a fairly low GTP hydrolysis rate. Plays a role in control of the cell cycle, stress response, ribosome biogenesis and in those bacteria that undergo differentiation, in morphogenesis control. This Frankia casuarinae (strain DSM 45818 / CECT 9043 / HFP020203 / CcI3) protein is GTPase Obg.